A 201-amino-acid polypeptide reads, in one-letter code: Recombination protein RecR (201 aa).

A C4-type zinc finger spans residues 57-72 (CKYCRTFTEQEQCTIC). The Toprim domain occupies 81-176 (GQICVVESPA…TASRIAHGVP (96 aa)).

It belongs to the RecR family.

In terms of biological role, may play a role in DNA repair. It seems to be involved in an RecBC-independent recombinational process of DNA repair. It may act with RecF and RecO. The sequence is that of Recombination protein RecR from Photorhabdus laumondii subsp. laumondii (strain DSM 15139 / CIP 105565 / TT01) (Photorhabdus luminescens subsp. laumondii).